The chain runs to 171 residues: Siroheme decarboxylase NirH subunit (171 aa).

Belongs to the Ahb/Nir family. Probably forms a complex composed of NirD, NirL, NirG and NirH. All proteins are required for the total conversion of siroheme to didecarboxysiroheme.

It catalyses the reaction siroheme + 2 H(+) = 12,18-didecarboxysiroheme + 2 CO2. It participates in porphyrin-containing compound metabolism. Involved in heme d1 biosynthesis. Catalyzes the decarboxylation of siroheme into didecarboxysiroheme. The chain is Siroheme decarboxylase NirH subunit from Pseudomonas aeruginosa (strain ATCC 15692 / DSM 22644 / CIP 104116 / JCM 14847 / LMG 12228 / 1C / PRS 101 / PAO1).